The primary structure comprises 253 residues: 5'/3'-nucleotidase SurE (253 aa).

4 residues coordinate a divalent metal cation: Asp8, Asp9, Ser39, and Asn92.

This sequence belongs to the SurE nucleotidase family. A divalent metal cation is required as a cofactor.

It is found in the cytoplasm. It catalyses the reaction a ribonucleoside 5'-phosphate + H2O = a ribonucleoside + phosphate. It carries out the reaction a ribonucleoside 3'-phosphate + H2O = a ribonucleoside + phosphate. The catalysed reaction is [phosphate](n) + H2O = [phosphate](n-1) + phosphate + H(+). In terms of biological role, nucleotidase with a broad substrate specificity as it can dephosphorylate various ribo- and deoxyribonucleoside 5'-monophosphates and ribonucleoside 3'-monophosphates with highest affinity to 3'-AMP. Also hydrolyzes polyphosphate (exopolyphosphatase activity) with the preference for short-chain-length substrates (P20-25). Might be involved in the regulation of dNTP and NTP pools, and in the turnover of 3'-mononucleotides produced by numerous intracellular RNases (T1, T2, and F) during the degradation of various RNAs. The sequence is that of 5'/3'-nucleotidase SurE from Salmonella paratyphi A (strain AKU_12601).